The primary structure comprises 754 residues: MSKRIIQSVLSVSVLASMMSMAFAAQNEQEQAEQTLEKPAEPVKLETIFVTAEEQVKQSLGVSVITKEDLEKLPVRNDISDYVRRMPGVNLTGNSATGQRGNNRQIDIRGMGPENTLILVDGKPINSRNSVRYGWKGERDTRGDSNWVPAEAIESIEVLRGPAAARYGSGAAGGVVNIITKKVTNETHGSVEFYTSQPEDSKEGSSNRVGFNVSGPLIKDVLSYRLYGNYNKTEADDVDINKSIGSTAAGREGVKNKDISGRLAWQATDQQTVLLDISSSKQGNIYSGDSQLNANAEADAILSQLIGKETNTMYRDSYALTHEGDWSWGKSKLVAQYDKTHNKRLPEGLAGSVEGKINNLDDKATSRLETLRFNGEANIPFEYYLPQVLTVGTEWVEDRFKDNVSTTQGKDSSGSGYGDQLAKGDRSKMESRIASAYIEDNLKVTDSTDVVLGLRFDDHSKSGSNWSPSLNITQKLNDYFTLKGGVAKAYKAPNMYQNAEGYLLSTNGNGCPANIESRCLLQGNGDLKPETSVNKELGIQFQKDIVNASLTWFRNDYKDKIVAGTHVVGTVDGSSTNANTGAVTNTKWNILRWENTPKALIQGFEGSLGLDFGDIRWTNNFTYMMDSKDKQTGNPLSLVPIYTINSIFDYDITDQLDVNFVFTQYGRQKSRQFAENRLESGIGSGGANSALKPSTVKSYSTAGINVGYKFSDQISTRVGVSNLFDKQILRDSNSISQTYNEPGRAYYASLKYSF.

Positions 1 to 24 (MSKRIIQSVLSVSVLASMMSMAFA) are cleaved as a signal peptide. A TBDR plug domain is found at 54–181 (EQVKQSLGVS…AGGVVNIITK (128 aa)). In terms of domain architecture, TBDR beta-barrel spans 186 to 754 (ETHGSVEFYT…AYYASLKYSF (569 aa)). Over residues 404–414 (VSTTQGKDSSG) the composition is skewed to polar residues. The interval 404-424 (VSTTQGKDSSGSGYGDQLAKG) is disordered. A disulfide bridge links Cys-511 with Cys-519. The TonB C-terminal box motif lies at 737-754 (QTYNEPGRAYYASLKYSF).

It belongs to the TonB-dependent receptor family.

The protein resides in the cell outer membrane. Functionally, probably involved in the initial step of iron uptake by binding iron chelating siderophores, thereby allowing extraction of iron from the environment. May bind the siderophore, ferric enterobactin, with micromolar affinity. This chain is Probable TonB-dependent siderophore receptor PirA, found in Acinetobacter baumannii (strain ATCC 19606 / DSM 30007 / JCM 6841 / CCUG 19606 / CIP 70.34 / NBRC 109757 / NCIMB 12457 / NCTC 12156 / 81).